The sequence spans 938 residues: Isoleucine--tRNA ligase (938 aa).

A 'HIGH' region motif is present at residues 58 to 68 (PYANGSIHIGH). Lysine 183 bears the N6-acetyllysine mark. Residue glutamate 561 participates in L-isoleucyl-5'-AMP binding. A 'KMSKS' region motif is present at residues 602–606 (KMSKS). Residue lysine 605 coordinates ATP. 4 residues coordinate Zn(2+): cysteine 901, cysteine 904, cysteine 921, and cysteine 924.

The protein belongs to the class-I aminoacyl-tRNA synthetase family. IleS type 1 subfamily. Monomer. It depends on Zn(2+) as a cofactor.

It localises to the cytoplasm. The enzyme catalyses tRNA(Ile) + L-isoleucine + ATP = L-isoleucyl-tRNA(Ile) + AMP + diphosphate. Catalyzes the attachment of isoleucine to tRNA(Ile). As IleRS can inadvertently accommodate and process structurally similar amino acids such as valine, to avoid such errors it has two additional distinct tRNA(Ile)-dependent editing activities. One activity is designated as 'pretransfer' editing and involves the hydrolysis of activated Val-AMP. The other activity is designated 'posttransfer' editing and involves deacylation of mischarged Val-tRNA(Ile). The sequence is that of Isoleucine--tRNA ligase from Escherichia fergusonii (strain ATCC 35469 / DSM 13698 / CCUG 18766 / IAM 14443 / JCM 21226 / LMG 7866 / NBRC 102419 / NCTC 12128 / CDC 0568-73).